We begin with the raw amino-acid sequence, 234 residues long: MDLGTIKGELDNNGYSTIKDFTADVRLMFENALTYNADSSPIWKHAKTLLYFHRKHDEHVKVKEDTNSAQPTLLRLQIIQIVKMLHLHLHLHLHLHLHLHLHLHLHLHLHLHLHLHLHLHLHLHLHLQNNQIINNNSNNNNNNNNNNNNNNNNNNNNNNNNNNNNNNNNNSNSTTNSSSSSSSSSSSSSSSSSSTTTTQKKYSDEERRNLMERINELAPDYVQEVLNIIDPNAS.

The region spanning 1–60 (MDLGTIKGELDNNGYSTIKDFTADVRLMFENALTYNADSSPIWKHAKTLLYFHRKHDEHV) is the Bromo domain. The span at 134–194 (NNNSNNNNNN…SSSSSSSSSS (61 aa)) shows a compositional bias: low complexity. Positions 134–209 (NNNSNNNNNN…KKYSDEERRN (76 aa)) are disordered.

In Dictyostelium discoideum (Social amoeba), this protein is Bromodomain-containing protein DDB_G0271118.